The following is a 737-amino-acid chain: Photosystem I P700 chlorophyll a apoprotein A2 (737 aa).

The next 8 helical transmembrane spans lie at 46 to 69, 135 to 158, 175 to 199, 273 to 291, 330 to 353, 369 to 395, 417 to 439, and 520 to 538; these read IFAS…FHVA, LYNG…LHLQ, LNHH…HVAI, IAHH…GHMY, LHFQ…QHMY, AALY…IFLV, AIIS…LYVH, and FLVH…LILV. C562 and C571 together coordinate [4Fe-4S] cluster. The next 2 helical transmembrane spans lie at 578–599 and 646–668; these read AFYL…YWHW and LSVW…MFLI. H657, M665, and Y673 together coordinate chlorophyll a. W674 contributes to the phylloquinone binding site. Residues 710–730 form a helical membrane-spanning segment; it reads LVGLAHFAVGYIVTYAAFLIA.

The protein belongs to the PsaA/PsaB family. As to quaternary structure, the PsaA/B heterodimer binds the P700 chlorophyll special pair and subsequent electron acceptors. PSI consists of a core antenna complex that captures photons, and an electron transfer chain that converts photonic excitation into a charge separation. The eukaryotic PSI reaction center is composed of at least 11 subunits. P700 is a chlorophyll a/chlorophyll a' dimer, A0 is one or more chlorophyll a, A1 is one or both phylloquinones and FX is a shared 4Fe-4S iron-sulfur center. is required as a cofactor.

The protein resides in the plastid. It is found in the cyanelle thylakoid membrane. The enzyme catalyses reduced [plastocyanin] + hnu + oxidized [2Fe-2S]-[ferredoxin] = oxidized [plastocyanin] + reduced [2Fe-2S]-[ferredoxin]. In terms of biological role, psaA and PsaB bind P700, the primary electron donor of photosystem I (PSI), as well as the electron acceptors A0, A1 and FX. PSI is a cytochrome c6-ferredoxin oxidoreductase, converting photonic excitation into a charge separation, which transfers an electron from the donor P700 chlorophyll pair to the spectroscopically characterized acceptors A0, A1, FX, FA and FB in turn. Oxidized P700 is reduced on the lumenal side of the thylakoid membrane by cytochrome c6. The chain is Photosystem I P700 chlorophyll a apoprotein A2 from Cyanophora paradoxa.